We begin with the raw amino-acid sequence, 76 residues long: Kappa-actitoxin-Avd4e (76 aa).

The first 19 residues, 1 to 19 (MNKALFLCLVVLCAAVVFA), serve as a signal peptide directing secretion. Residues 20 to 31 (AEDLQKAKHAPF) constitute a propeptide that is removed on maturation. Cystine bridges form between cysteine 37/cysteine 72, cysteine 39/cysteine 65, and cysteine 55/cysteine 73. The Cell attachment site signature appears at 45 to 47 (RGD).

The protein belongs to the sea anemone type 3 (BDS) potassium channel toxin family. Moderately expressed in the ectodermal tissue from the distal and proximal tentacles, body wall, and oral disk.

It localises to the secreted. The protein localises to the nematocyst. Is member of a fraction that shows antiangiogenic activity, since it inhibits human microvascular endothelial cells (HMEC) tubulogenesis. This protein could be a kunitz-type inhibitor with a RGD motif that could block angiogenesis in binding on integrins. Blocks Kv3 voltage-gated potassium channels. Reduces blood pressure. The polypeptide is Kappa-actitoxin-Avd4e (Anemonia viridis (Snakelocks anemone)).